The primary structure comprises 332 residues: D-2-hydroxyacid dehydrogenase (NAD(+)) (332 aa).

Residues Arg-237 and Glu-266 contribute to the active site. His-298 functions as the Proton donor in the catalytic mechanism.

Belongs to the D-isomer specific 2-hydroxyacid dehydrogenase family. In terms of assembly, monomer.

It catalyses the reaction a (2R)-2-hydroxycarboxylate + NAD(+) = a 2-oxocarboxylate + NADH + H(+). The catalysed reaction is (2R)-hydroxy-4-methylpentanoate + NAD(+) = 4-methyl-2-oxopentanoate + NADH + H(+). The protein operates within amino-acid degradation; L-leucine degradation. Its function is as follows. Involved in the reductive branch of L-leucine fermentation. Catalyzes the NADH-dependent reduction of 4-methyl-2-oxopentanoate (2-oxoisocaproate) to (R)-2-hydroxy-4-methylpentanoate ((R)-2-hydroxyisocaproate). For the reverse reaction, the enzyme accepts (R)- but not (S)-2-hydroxy-4-methylpentanoate. Can also use 2-oxopentanoate, 2-oxohexanoate and phenylpyruvate but not 2-oxoisovalerate and 2-oxobutyrate. Cannot use NADPH. The polypeptide is D-2-hydroxyacid dehydrogenase (NAD(+)) (Clostridioides difficile (Peptoclostridium difficile)).